Reading from the N-terminus, the 463-residue chain is Asparagine--tRNA ligase (463 aa).

The protein belongs to the class-II aminoacyl-tRNA synthetase family. Homodimer.

It localises to the cytoplasm. The enzyme catalyses tRNA(Asn) + L-asparagine + ATP = L-asparaginyl-tRNA(Asn) + AMP + diphosphate + H(+). This is Asparagine--tRNA ligase from Bacillus cereus (strain ATCC 10987 / NRS 248).